The sequence spans 119 residues: C-C motif chemokine 24 (119 aa).

The first 26 residues, 1–26 (MAGLMTIVTSLLFLGVCAHHIIPTGS), serve as a signal peptide directing secretion. Disulfide bonds link Cys33–Cys58 and Cys34–Cys74. An N-linked (GlcNAc...) asparagine glycan is attached at Asn115.

The protein belongs to the intercrine beta (chemokine CC) family. In terms of processing, N-glycosylated. As to expression, activated monocytes and activated T lymphocytes.

Its subcellular location is the secreted. Functionally, chemotactic for resting T-lymphocytes, and eosinophils. Has lower chemotactic activity for neutrophils but none for monocytes and activated lymphocytes. Is a strong suppressor of colony formation by a multipotential hematopoietic progenitor cell line. Binds to CCR3. This Homo sapiens (Human) protein is C-C motif chemokine 24.